We begin with the raw amino-acid sequence, 375 residues long: Prophage integrase IntE (375 aa).

The Core-binding (CB) domain maps to 82–167; that stretch reads ITTSTWLDRY…VLIDVFKEAQ (86 aa). The region spanning 189–375 is the Tyr recombinase domain; sequence ITRQRLSLEE…RGKGWSKVAL (187 aa). Active-site residues include Arg-226, Lys-249, His-330, Arg-333, and His-353. A disordered region spans residues 350–375; that stretch reads LLGHKTQQQTDRYHDDRGKGWSKVAL. Tyr-362 acts as the O-(3'-phospho-DNA)-tyrosine intermediate in catalysis.

This sequence belongs to the 'phage' integrase family.

Integrase from the cryptic lambdoid prophage e14. Integrase is necessary for integration of the phage into the host genome by site-specific recombination. In conjunction with excisionase, integrase is also necessary for excision of the prophage from the host genome. The chain is Prophage integrase IntE (intE) from Escherichia coli (strain K12).